The sequence spans 268 residues: MMQEGGLPRAKKRFGQNFLVQPQIVERIVAAIRPASGDHLVEIGPGPGALTKSLLRLLPQFTVVELDRDMIAGLRALAPPEQLRVLQADALEVDFAALAGAGNALRIVGNLPYNVATPLIFHILEHAEQVRDMHFMLQKEVVDRVVAMPGSKAYGRLSVMIQAYCAVESLFTVAPGNFFPVPKVDSAFMRLIPHRPGLLPPHLQAPFARIVATSFAQRRKTLANNLRGILSADDLRGLQIDPGSRAETLDQAAFFRLAEATVEQGNRS.

Residues N17, L19, G44, E65, D89, and N110 each contribute to the S-adenosyl-L-methionine site.

Belongs to the class I-like SAM-binding methyltransferase superfamily. rRNA adenine N(6)-methyltransferase family. RsmA subfamily.

It is found in the cytoplasm. It catalyses the reaction adenosine(1518)/adenosine(1519) in 16S rRNA + 4 S-adenosyl-L-methionine = N(6)-dimethyladenosine(1518)/N(6)-dimethyladenosine(1519) in 16S rRNA + 4 S-adenosyl-L-homocysteine + 4 H(+). In terms of biological role, specifically dimethylates two adjacent adenosines (A1518 and A1519) in the loop of a conserved hairpin near the 3'-end of 16S rRNA in the 30S particle. May play a critical role in biogenesis of 30S subunits. This Acidithiobacillus ferrooxidans (strain ATCC 53993 / BNL-5-31) (Leptospirillum ferrooxidans (ATCC 53993)) protein is Ribosomal RNA small subunit methyltransferase A.